The chain runs to 190 residues: Apolipoprotein M (190 aa).

The N-terminal stretch at 1–17 (MFHQVWAALLYLYGLLF) is a signal peptide. 3 disulfides stabilise this stretch: Cys23/Cys169, Cys95/Cys185, and Cys130/Cys159. 2 residues coordinate tetradecanoate: Glu138 and Arg145.

This sequence belongs to the calycin superfamily. Lipocalin family. Highly divergent. Interacts with LRP2; LRP2 mediates APOM renal uptake and subsequent lysosomal degradation. In terms of tissue distribution, expressed by the liver; secreted in plasma.

The protein localises to the secreted. Its function is as follows. Probably involved in lipid transport. Can bind sphingosine-1-phosphate, myristic acid, palmitic acid and stearic acid, retinol, all-trans-retinoic acid and 9-cis-retinoic acid. In Rattus norvegicus (Rat), this protein is Apolipoprotein M (Apom).